The chain runs to 330 residues: MKKPIVAVIAGGYSGEHSVSLKSAAGILSWLGSEPFSTFLVLIERDRWSVRVSEQREVPLDKNDFSFDLDGERIRFDYAYITIHGTPGENGLLQGYLDMIGIPYNTGDTLVESLTFNKYVCNRFLSGFGIRIADSMRLTGRDTQPDVADLIARMGLPLFVKPNVGGSSIATTKVVEAAQLLPAIEQAFSEGEEVMIERLICGTEVTCGAFLRKKEVVALPVTEVVAHNEFFDFDAKYNGAVEEITPARISDEATRLIQTMTARIYELLNARGIIRVDYIIEADGIPTLLEVNTTPGMTPTSFIPQQVRAAGMDMKEVLCTIIRDGLNETQ.

The 202-residue stretch at 122-323 (NRFLSGFGIR…MKEVLCTIIR (202 aa)) folds into the ATP-grasp domain. 151–206 (IARMGLPLFVKPNVGGSSIATTKVVEAAQLLPAIEQAFSEGEEVMIERLICGTEVT) provides a ligand contact to ATP. Aspartate 277, glutamate 290, and asparagine 292 together coordinate Mg(2+).

This sequence belongs to the D-alanine--D-alanine ligase family. The cofactor is Mg(2+). Requires Mn(2+) as cofactor.

The protein resides in the cytoplasm. The catalysed reaction is 2 D-alanine + ATP = D-alanyl-D-alanine + ADP + phosphate + H(+). It functions in the pathway cell wall biogenesis; peptidoglycan biosynthesis. Cell wall formation. The chain is D-alanine--D-alanine ligase from Porphyromonas gingivalis (strain ATCC BAA-308 / W83).